The sequence spans 206 residues: Large ribosomal subunit protein uL4 (206 aa).

The interval 47 to 94 is disordered; that stretch reads NRAQKDRSEINKSTKKPFRQKGTGRARAGRASSPLWRGGGKVFPNSPD. Residues 49 to 58 show a composition bias toward basic and acidic residues; it reads AQKDRSEINK. Basic residues predominate over residues 59–74; sequence STKKPFRQKGTGRARA.

Belongs to the universal ribosomal protein uL4 family. In terms of assembly, part of the 50S ribosomal subunit.

One of the primary rRNA binding proteins, this protein initially binds near the 5'-end of the 23S rRNA. It is important during the early stages of 50S assembly. It makes multiple contacts with different domains of the 23S rRNA in the assembled 50S subunit and ribosome. In terms of biological role, forms part of the polypeptide exit tunnel. This chain is Large ribosomal subunit protein uL4, found in Laribacter hongkongensis (strain HLHK9).